Reading from the N-terminus, the 116-residue chain is Flagellar transcriptional regulator FlhD (116 aa).

Belongs to the FlhD family. Homodimer; disulfide-linked. Forms a heterohexamer composed of two FlhC and four FlhD subunits. Each FlhC binds a FlhD dimer, forming a heterotrimer, and a hexamer assembles by dimerization of two heterotrimers.

The protein resides in the cytoplasm. Functions in complex with FlhC as a master transcriptional regulator that regulates transcription of several flagellar and non-flagellar operons by binding to their promoter region. Activates expression of class 2 flagellar genes, including fliA, which is a flagellum-specific sigma factor that turns on the class 3 genes. Also regulates genes whose products function in a variety of physiological pathways. In Pectobacterium carotovorum subsp. carotovorum (strain PC1), this protein is Flagellar transcriptional regulator FlhD.